A 300-amino-acid polypeptide reads, in one-letter code: Ribosomal protein L11 methyltransferase (300 aa).

Positions 148, 171, 193, and 235 each coordinate S-adenosyl-L-methionine.

Belongs to the methyltransferase superfamily. PrmA family.

The protein resides in the cytoplasm. The enzyme catalyses L-lysyl-[protein] + 3 S-adenosyl-L-methionine = N(6),N(6),N(6)-trimethyl-L-lysyl-[protein] + 3 S-adenosyl-L-homocysteine + 3 H(+). Methylates ribosomal protein L11. The sequence is that of Ribosomal protein L11 methyltransferase from Desulfotalea psychrophila (strain LSv54 / DSM 12343).